We begin with the raw amino-acid sequence, 372 residues long: L-selectin (372 aa).

The signal sequence occupies residues 1-28 (MIFPWKCQSTQRDLCNIFKLWGWTMLCC). Positions 29–38 (DFLAHHGTDC) are excised as a propeptide. Over 39–332 (WTYHYSEKPM…FSMIKEGDYN (294 aa)) the chain is Extracellular. The C-type lectin domain maps to 55 to 155 (RFCRENYTDL…ACHKLKAALC (101 aa)). 10 cysteine pairs are disulfide-bonded: cysteine 57–cysteine 155, cysteine 128–cysteine 147, cysteine 128–cysteine 160, cysteine 160–cysteine 171, cysteine 165–cysteine 180, cysteine 182–cysteine 191, cysteine 197–cysteine 241, cysteine 227–cysteine 254, cysteine 259–cysteine 303, and cysteine 289–cysteine 316. N-linked (GlcNAc...) asparagine glycans are attached at residues asparagine 60 and asparagine 104. Residues glutamate 118, asparagine 120, glutamate 126, asparagine 143, and aspartate 144 each coordinate Ca(2+). The EGF-like domain maps to 156–192 (YTASCQPWSCSGHGECVEIINNYTCNCDVGYYGPQCQ). The N-linked (GlcNAc...) asparagine glycan is linked to asparagine 177. Sushi domains follow at residues 195-256 (IQCE…TCQV) and 257-318 (IQCE…ICQK). Residues asparagine 216, asparagine 226, asparagine 232, asparagine 246, and asparagine 271 are each glycosylated (N-linked (GlcNAc...) asparagine). Residues 333-355 (PLFIPVAVMVTAFSGLAFIIWLA) form a helical membrane-spanning segment. Topologically, residues 356–372 (RRLKKGKKSKKSMDDPY) are cytoplasmic.

It belongs to the selectin/LECAM family. Interaction with SELPLG/PSGL1 and PODXL2 is required for promoting recruitment and rolling of leukocytes. This interaction is dependent on the sialyl Lewis X glycan modification of SELPLG and PODXL2, and tyrosine sulfation modifications of SELPLG. Sulfation on 'Tyr-51' of SELPLG is important for L-selectin binding. In terms of processing, N-glycosylated.

Its subcellular location is the cell membrane. Calcium-dependent lectin that mediates cell adhesion by binding to glycoproteins on neighboring cells. Mediates the adherence of lymphocytes to endothelial cells of high endothelial venules in peripheral lymph nodes. Promotes initial tethering and rolling of leukocytes in endothelia. This chain is L-selectin (SELL), found in Pongo pygmaeus (Bornean orangutan).